Consider the following 351-residue polypeptide: MIIQRVVLDSRPGKNGNPVAENFRVEEVSLPDTINEGQVRVRTLYLSVDPYMRCKMNEETGADYLAPWQLAQVADGGGLGVIEESKHQKLAKGDFVTSFYWPWQTKAILDGNGLEKVDPQLVDGHLSYFLGAIGMPGLTSLIGVQEKGHVSAGSNQTMVVSGAAGACGSLAGQIGHLLGCSRVVGICGTHEKCLFLTSELGFDAAVNYKTGNVAEQLREACPDGVDVYFDNVGGDISNAVISQMNQNSHIILCGQISQYNKDVPYPPPLPPAVEAIQKERNITRERFMVLNYKDRFEPGILQLSQWFKEGKLKIKETVANGLENMGVAFQSMMTGGNIGKQIVRISEDSSP.

Substrate is bound at residue 99–100 (FY). NADP(+) is bound by residues 165 to 168 (GACG), Lys192, Tyr208, Asn231, 253 to 259 (CGQISQY), 287 to 289 (FMV), and Asn337. 288-290 (MVL) lines the substrate pocket.

The protein belongs to the NADP-dependent oxidoreductase L4BD family. In terms of assembly, monomer.

The protein localises to the cytoplasm. The catalysed reaction is 13,14-dihydro-15-oxo-prostaglandin E2 + NAD(+) = 15-oxoprostaglandin E2 + NADH + H(+). It catalyses the reaction 13,14-dihydro-15-oxo-prostaglandin E2 + NADP(+) = 15-oxoprostaglandin E2 + NADPH + H(+). It carries out the reaction 13,14-dihydro-15-oxo-PGF2alpha + NADP(+) = 15-oxoprostaglandin F2alpha + NADPH + H(+). The enzyme catalyses 13,14-dihydro-15-oxo-prostaglandin E1 + NADP(+) = 15-oxoprostaglandin E1 + NADPH + H(+). The catalysed reaction is 13,14-dihydro-15-oxo-prostaglandin F1alpha + NADP(+) = 15-oxoprostaglandin F1alpha + NADPH + H(+). Functionally, functions as 15-oxo-prostaglandin 13-reductase and acts on 15-keto-PGE1, 15-keto-PGE2, 15-keto-PGE1-alpha and 15-keto-PGE2-alpha with highest activity towards 15-keto-PGE2. Overexpression represses transcriptional activity of PPARG and inhibits adipocyte differentiation. This Rattus norvegicus (Rat) protein is Prostaglandin reductase 2.